The primary structure comprises 118 residues: Large ribosomal subunit protein uL18 (118 aa).

This sequence belongs to the universal ribosomal protein uL18 family. In terms of assembly, part of the 50S ribosomal subunit; part of the 5S rRNA/L5/L18/L25 subcomplex. Contacts the 5S and 23S rRNAs.

Functionally, this is one of the proteins that bind and probably mediate the attachment of the 5S RNA into the large ribosomal subunit, where it forms part of the central protuberance. In Sulfurimonas denitrificans (strain ATCC 33889 / DSM 1251) (Thiomicrospira denitrificans (strain ATCC 33889 / DSM 1251)), this protein is Large ribosomal subunit protein uL18.